Consider the following 193-residue polypeptide: ATP synthase subunit b (193 aa).

The helical transmembrane segment at P24–W44 threads the bilayer.

It belongs to the ATPase B chain family. F-type ATPases have 2 components, F(1) - the catalytic core - and F(0) - the membrane proton channel. F(1) has five subunits: alpha(3), beta(3), gamma(1), delta(1), epsilon(1). F(0) has three main subunits: a(1), b(2) and c(10-14). The alpha and beta chains form an alternating ring which encloses part of the gamma chain. F(1) is attached to F(0) by a central stalk formed by the gamma and epsilon chains, while a peripheral stalk is formed by the delta and b chains.

The protein resides in the cell membrane. In terms of biological role, f(1)F(0) ATP synthase produces ATP from ADP in the presence of a proton or sodium gradient. F-type ATPases consist of two structural domains, F(1) containing the extramembraneous catalytic core and F(0) containing the membrane proton channel, linked together by a central stalk and a peripheral stalk. During catalysis, ATP synthesis in the catalytic domain of F(1) is coupled via a rotary mechanism of the central stalk subunits to proton translocation. Functionally, component of the F(0) channel, it forms part of the peripheral stalk, linking F(1) to F(0). In Parafrankia sp. (strain EAN1pec), this protein is ATP synthase subunit b.